Reading from the N-terminus, the 437-residue chain is GTPase Obg (437 aa).

The 159-residue stretch at 2–160 (SLFLDTARIE…KILLLELRVL (159 aa)) folds into the Obg domain. An OBG-type G domain is found at 161–338 (ADVGLVGFPS…LLARTSELLA (178 aa)). Residues 167–174 (GFPSVGKS), 192–196 (FTTIT), 214–217 (DMPG), 284–287 (NKMD), and 319–321 (SGL) contribute to the GTP site. Positions 174 and 194 each coordinate Mg(2+). The OCT domain maps to 359–437 (GFEEEEKPFK…IQKFEFEFVD (79 aa)).

It belongs to the TRAFAC class OBG-HflX-like GTPase superfamily. OBG GTPase family. As to quaternary structure, monomer. Mg(2+) serves as cofactor.

The protein resides in the cytoplasm. Functionally, an essential GTPase which binds GTP, GDP and possibly (p)ppGpp with moderate affinity, with high nucleotide exchange rates and a fairly low GTP hydrolysis rate. Plays a role in control of the cell cycle, stress response, ribosome biogenesis and in those bacteria that undergo differentiation, in morphogenesis control. The polypeptide is GTPase Obg (Lactococcus lactis subsp. lactis (strain IL1403) (Streptococcus lactis)).